We begin with the raw amino-acid sequence, 835 residues long: MAAPILKDVVAYVEVWSSNGTENYSKTFTTQLVEMGAKVSKTFNKQVTHVIFKDGYQSTWDKAQKRGVKLVSVLWVEKCRTAGAHIDESLFPAANTNEHLPSLIKKKRKCMQPKDFNFKTPENDKRFQKKFEKMAKELQRQKTNLDDDVPILLFESNGSLIYTPTIEINSSHHSAMEKRLQEMKEKRENLSPTSSQMIQQSHDNPSNSLCEAPLNISRDTLCSDECFAGGLHSSFDDLCGNSGCGNQERKLEGSINDIKSDVCISSLVLKANNIHSSPSFTHLDKSSPQKFLSNLSKEEINLQRNIAGKIVTPDQKQAAGVSQETFEEKYRLSPTLSSTKGHLLIHSRPRSSSVKRKRVSHGSHSPPKEKCKRKRSIRRSIMPRLQLCRSEGRLQHVAGPALEALSCGESSYDDYFSPDNLKERNSENLPPESQLPSSPAQFSCRSLSKKERTSIFEMSDFSCVGKKTRTVDITNFTAKTISSPQKTGNGEGRATSSCVTSAPEEALRCCGQAGKEDACPEGNGFSYTIEDPALPKGHDDDLTPLEGSLEEMKEAVDLKSTQNKGTTSKISNSSEGEAQSEHEPCFIVDCNMETSTEEKENLPGGYSGSVKNRPTRHDVLDDSCDGFKDLIKPHEELKKSGRGKKPTRTLVMTSMPSEKQNVVIQVVDKLKGFSIAPDVCETTTHVLSGKPLRTLNVLLGIARGCWVLSYDWVLWSLELGHWISEEPFELSHHFPAAPLCRSECHLSAGPYRGTLFADQPVMFVSPASSPPVAKLCELVHLCGGRVSQVPRQASIVIGPYSGKKKATVKYLSEKWVLDSITQHKVCASENYLLSQ.

In terms of domain architecture, BRCT 1 spans 1–93; that stretch reads MAAPILKDVV…AHIDESLFPA (93 aa). Residues S279, S287, S296, and S333 each carry the phosphoserine modification. 2 disordered regions span residues 332 to 376 and 417 to 442; these read LSPT…RKRS and SPDN…PAQF. T335 carries the post-translational modification Phosphothreonine. The span at 343–361 shows a compositional bias: basic residues; that stretch reads LLIHSRPRSSSVKRKRVSH. Phosphoserine is present on S548. Positions 555 to 583 are disordered; the sequence is AVDLKSTQNKGTTSKISNSSEGEAQSEHE. The segment covering 559–577 has biased composition (polar residues); that stretch reads KSTQNKGTTSKISNSSEGE. BRCT domains are found at residues 640 to 730 and 751 to 833; these read SGRG…PFEL and YRGT…NYLL.

In terms of assembly, interacts with CDC27 and maybe other components of the APC/C complex. Interacts with histone variant H2AX under DNA damage conditions.

It is found in the cytoplasm. The protein resides in the cytoskeleton. The protein localises to the microtubule organizing center. Its subcellular location is the centrosome. In terms of biological role, implicated in chromosome condensation and DNA damage induced cellular responses. May play a role in neurogenesis and regulation of the size of the cerebral cortex. The chain is Microcephalin from Pan troglodytes (Chimpanzee).